A 507-amino-acid chain; its full sequence is RNA-splicing ligase RtcB homolog (507 aa).

5 residues coordinate Mn(2+): aspartate 121, cysteine 124, histidine 229, histidine 261, and histidine 355. 228–232 serves as a coordination point for GMP; the sequence is NHYAE. GMP is bound by residues 355-356, 404-407, serine 411, 430-433, and lysine 506; these read HN, GGTM, and HGAG. Histidine 430 functions as the GMP-histidine intermediate in the catalytic mechanism.

Belongs to the RtcB family. Catalytic component of the tRNA-splicing ligase complex. The cofactor is Mn(2+).

The catalysed reaction is a 3'-end 3'-phospho-ribonucleotide-RNA + a 5'-end dephospho-ribonucleoside-RNA + GTP = a ribonucleotidyl-ribonucleotide-RNA + GMP + diphosphate. It catalyses the reaction a 3'-end 2',3'-cyclophospho-ribonucleotide-RNA + a 5'-end dephospho-ribonucleoside-RNA + GTP + H2O = a ribonucleotidyl-ribonucleotide-RNA + GMP + diphosphate + H(+). Catalytic subunit of the tRNA-splicing ligase complex that acts by directly joining spliced tRNA halves to mature-sized tRNAs by incorporating the precursor-derived splice junction phosphate into the mature tRNA as a canonical 3',5'-phosphodiester. May act as an RNA ligase with broad substrate specificity, and may function toward other RNAs. The chain is RNA-splicing ligase RtcB homolog from Micromonas pusilla (strain CCMP1545) (Picoplanktonic green alga).